The chain runs to 558 residues: Galactoside 2-alpha-L-fucosyltransferase (558 aa).

Over 1–43 (MDQNSYRRRSSPIRTTTGGSKSVNFSELLQMKYLSSGTMKLTR) the chain is Cytoplasmic. A helical; Signal-anchor for type II membrane protein membrane pass occupies residues 44-64 (TFTTCLIVFSVLVAFSMIFHQ). At 65–558 (HPSDSNRIMG…EDISWGLKLV (494 aa)) the chain is on the lumenal side. Residues N88 and N504 are each glycosylated (N-linked (GlcNAc...) asparagine).

This sequence belongs to the glycosyltransferase 37 family. Homodimer. Interacts with MUR3, XLT2, XXT2 and XXT5. Expressed in roots, stems, leaves, flowers, siliques and seedlings.

It localises to the golgi apparatus. It is found in the golgi stack membrane. The protein localises to the golgi apparatus membrane. Its function is as follows. Involved in cell wall biosynthesis. Is both necessary and sufficient for the addition of the terminal fucosyl residue on xyloglucan side chains, but is not involved in the fucosylation of other cell wall components. Associates with other xyloglucan-synthesizing enzymes to form multiprotein complexes for xyloglucan synthesis in the Golgi. The polypeptide is Galactoside 2-alpha-L-fucosyltransferase (FUT1) (Arabidopsis thaliana (Mouse-ear cress)).